A 278-amino-acid polypeptide reads, in one-letter code: Urease accessory protein UreD (278 aa).

Belongs to the UreD family. In terms of assembly, ureD, UreF and UreG form a complex that acts as a GTP-hydrolysis-dependent molecular chaperone, activating the urease apoprotein by helping to assemble the nickel containing metallocenter of UreC. The UreE protein probably delivers the nickel.

Its subcellular location is the cytoplasm. Required for maturation of urease via the functional incorporation of the urease nickel metallocenter. This is Urease accessory protein UreD from Escherichia coli.